Consider the following 40-residue polypeptide: Photosystem II reaction center protein J (40 aa).

Residues 8-28 (IPLWLIGTVTGIPVIGLIGIF) traverse the membrane as a helical segment.

The protein belongs to the PsbJ family. In terms of assembly, PSII is composed of 1 copy each of membrane proteins PsbA, PsbB, PsbC, PsbD, PsbE, PsbF, PsbH, PsbI, PsbJ, PsbK, PsbL, PsbM, PsbT, PsbX, PsbY, PsbZ, Psb30/Ycf12, at least 3 peripheral proteins of the oxygen-evolving complex and a large number of cofactors. It forms dimeric complexes.

It is found in the plastid. The protein localises to the chloroplast thylakoid membrane. Functionally, one of the components of the core complex of photosystem II (PSII). PSII is a light-driven water:plastoquinone oxidoreductase that uses light energy to abstract electrons from H(2)O, generating O(2) and a proton gradient subsequently used for ATP formation. It consists of a core antenna complex that captures photons, and an electron transfer chain that converts photonic excitation into a charge separation. The protein is Photosystem II reaction center protein J of Vitis vinifera (Grape).